Here is a 279-residue protein sequence, read N- to C-terminus: Orotidine 5'-phosphate decarboxylase (279 aa).

Substrate contacts are provided by residues aspartate 8, lysine 30, 58 to 67, threonine 117, arginine 177, glutamine 186, glycine 206, and arginine 207; that span reads DLKFHDIPNT. Catalysis depends on lysine 60, which acts as the Proton donor.

The protein belongs to the OMP decarboxylase family. Type 1 subfamily. In terms of assembly, homodimer.

The enzyme catalyses orotidine 5'-phosphate + H(+) = UMP + CO2. The protein operates within pyrimidine metabolism; UMP biosynthesis via de novo pathway; UMP from orotate: step 2/2. Its function is as follows. Catalyzes the decarboxylation of orotidine 5'-monophosphate (OMP) to uridine 5'-monophosphate (UMP). This Campylobacter jejuni subsp. jejuni serotype O:2 (strain ATCC 700819 / NCTC 11168) protein is Orotidine 5'-phosphate decarboxylase.